The following is a 181-amino-acid chain: Large ribosomal subunit protein uL5 (181 aa).

Belongs to the universal ribosomal protein uL5 family. As to quaternary structure, part of the 50S ribosomal subunit; part of the 5S rRNA/L5/L18/L25 subcomplex. Contacts the 5S rRNA and the P site tRNA. Forms a bridge to the 30S subunit in the 70S ribosome.

In terms of biological role, this is one of the proteins that bind and probably mediate the attachment of the 5S RNA into the large ribosomal subunit, where it forms part of the central protuberance. In the 70S ribosome it contacts protein S13 of the 30S subunit (bridge B1b), connecting the 2 subunits; this bridge is implicated in subunit movement. Contacts the P site tRNA; the 5S rRNA and some of its associated proteins might help stabilize positioning of ribosome-bound tRNAs. This Helicobacter pylori (strain ATCC 700392 / 26695) (Campylobacter pylori) protein is Large ribosomal subunit protein uL5.